A 271-amino-acid chain; its full sequence is Elongation factor Ts (271 aa).

The tract at residues 76-79 (TDFV) is involved in Mg(2+) ion dislocation from EF-Tu.

The protein belongs to the EF-Ts family.

It is found in the cytoplasm. Associates with the EF-Tu.GDP complex and induces the exchange of GDP to GTP. It remains bound to the aminoacyl-tRNA.EF-Tu.GTP complex up to the GTP hydrolysis stage on the ribosome. This chain is Elongation factor Ts, found in Mycolicibacterium vanbaalenii (strain DSM 7251 / JCM 13017 / BCRC 16820 / KCTC 9966 / NRRL B-24157 / PYR-1) (Mycobacterium vanbaalenii).